The following is a 35-amino-acid chain: Toxin Ado1 (35 aa).

Intrachain disulfides connect Cys-5/Cys-20, Cys-12/Cys-25, and Cys-19/Cys-32.

It is found in the secreted. Functionally, binds reversibly and blocks P/Q-type voltage-gated calcium channels (Cav). The sequence is that of Toxin Ado1 from Agriosphodrus dohrni (Japanese assassin-bug).